We begin with the raw amino-acid sequence, 330 residues long: Flotillin-like protein FloA (330 aa).

2 helical membrane passes run 3–23 (IISVIVIGGLVLVAIVATLYM) and 26–46 (LRLWIAAQASGAGVSMLTLIA).

The protein belongs to the flotillin-like FloA family. Homooligomerizes.

Its subcellular location is the cell membrane. It localises to the membrane raft. Functionally, found in functional membrane microdomains (FMM) that may be equivalent to eukaryotic membrane rafts. FMMs are highly dynamic and increase in number as cells age. Flotillins are thought to be important factors in membrane fluidity. The polypeptide is Flotillin-like protein FloA (Sorangium cellulosum (strain So ce56) (Polyangium cellulosum (strain So ce56))).